Reading from the N-terminus, the 383-residue chain is MEVLATDTVSQQERLQAIAEKRRKQAEIESKRRQLEDDRRQLQYLKSKALRERWLLEGTPSSASEGDEDMRKQMQEDEQKARSLEESITRLEKEIDVLEFGESAPAAPKENSAAPSPIRPHSTSPAKEEQKSETMVNAQQTPLGTPKENRKSTPVRSPGGSTMMKAAMYSVEITVEKDKVTGETRVLSSTTLLPRDPLPQGVKVYEDETKVVHAVDGLSENGIQPLSSSEVDELIHKADEVTLSEAGSTTGPAEPRGLAEDVTRTTPSRREITGVEAQPGEATSGPPGIQPGQEPPVTMVFMGYQNVEDEAETKKVLGLQDTIKAELVVIEDSVTPREPAPLNGSAAELPATKEENQTGPTTTPSDTQDLDMKKPRCRCCSVM.

Methionine 1 carries the post-translational modification N-acetylmethionine. A coiled-coil region spans residues 7–101 (DTVSQQERLQ…EKEIDVLEFG (95 aa)). 3 disordered regions span residues 51 to 164 (RERW…STMM), 242 to 293 (TLSE…QPGQ), and 333 to 374 (SVTP…DMKK). Residues 69-96 (DMRKQMQEDEQKARSLEESITRLEKEID) show a composition bias toward basic and acidic residues. Phosphoserine occurs at positions 116, 122, and 124. The span at 133 to 143 (ETMVNAQQTPL) shows a compositional bias: polar residues. 3 positions are modified to phosphothreonine: threonine 141, threonine 145, and threonine 153. Serine 157 and serine 161 each carry phosphoserine. Residue threonine 242 is modified to Phosphothreonine. A Phosphoserine modification is found at serine 244. A compositionally biased stretch (basic and acidic residues) spans 257 to 273 (GLAEDVTRTTPSRREIT). Serine 345 is subject to Phosphoserine. Positions 357 to 367 (QTGPTTTPSDT) are enriched in polar residues. Phosphothreonine occurs at positions 361, 362, and 363. Serine 365 carries the post-translational modification Phosphoserine. Threonine 367 bears the Phosphothreonine mark. Residues cysteine 377 and cysteine 379 are each lipidated (S-palmitoyl cysteine). Cysteine 380 is subject to Cysteine methyl ester. Residue cysteine 380 is the site of S-farnesyl cysteine attachment. Positions 381–383 (SVM) are cleaved as a propeptide — removed in mature form.

It belongs to the paralemmin family. As to quaternary structure, interacts with dopamine receptor DRD3. Expressed in neurons cells of neuropil-rich areas of the brain, in the Purkinje cells of the cerebellum, in cells of the cerebral cortex, hippocampus, brainstem nuclei and glial processes and sheaths. Expressed in the medulla of the adrenal chromaffin cells and renal duct cells (at protein level).

It localises to the cell membrane. The protein resides in the cell projection. It is found in the filopodium membrane. The protein localises to the axon. Its subcellular location is the dendrite. It localises to the dendritic spine. The protein resides in the basolateral cell membrane. It is found in the apicolateral cell membrane. In terms of biological role, involved in plasma membrane dynamics and cell process formation. Necessary for axonal and dendritic filopodia induction, for dendritic spine maturation and synapse formation in a palmitoylation-dependent manner. The sequence is that of Paralemmin-1 (Palm) from Rattus norvegicus (Rat).